Here is a 905-residue protein sequence, read N- to C-terminus: Lateral signaling target protein 2 homolog (905 aa).

K87 participates in a covalent cross-link: Glycyl lysine isopeptide (Lys-Gly) (interchain with G-Cter in ubiquitin). S334 bears the Phosphoserine mark. The segment at 354–441 is disordered; that stretch reads DEMSSLLSPP…RGQDGQSGEV (88 aa). Polar residues-rich tracts occupy residues 358–367 and 418–437; these read SLLSPPSACQ and PGNT…QDGQ. Residue T512 is modified to Phosphothreonine. Disordered regions lie at residues 516–552 and 589–691; these read NPKS…DNSH and PGSV…RGDV. Composition is skewed to basic and acidic residues over residues 542 to 552 and 605 to 615; these read PRAEGTGDNSH and GGDKEPERIDE. Positions 647-656 are enriched in polar residues; that stretch reads SGPQVDTASR. A compositionally biased stretch (basic and acidic residues) spans 659 to 678; it reads GEGEVKGQPEPEARKQDPEK. An FYVE-type zinc finger spans residues 835-895; it reads DEACGFCTSC…VCTHCYMFHV (61 aa). C841, C844, C857, C860, C865, C868, and C887 together coordinate Zn(2+). T888 bears the Phosphothreonine; by MAP2K mark. C890 contributes to the Zn(2+) binding site.

This sequence belongs to the lst-2 family. Interacts with TRIM3. Post-translationally, monoubiquitination at Lys-87 prevents binding to phosphatidylinositol 3-phosphate (PI3P) and localization to early endosome membranes. In terms of tissue distribution, enriched in brain (at protein level).

Its subcellular location is the cytoplasm. It is found in the cytosol. The protein localises to the early endosome membrane. Its function is as follows. Negative regulator of epidermal growth factor receptor (EGFR) signaling. Acts by promoting EGFR degradation in endosomes when not monoubiquitinated. This is Lateral signaling target protein 2 homolog (Zfyve28) from Mus musculus (Mouse).